A 612-amino-acid chain; its full sequence is Alpha-1,3-galactosidase B (612 aa).

Residues 1 to 19 form the signal peptide; that stretch reads MKWYLWGAVVLLYSLFGSA. Residue Cys-20 is the site of N-palmitoyl cysteine attachment. Cys-20 carries the S-diacylglycerol cysteine lipid modification. PbH1 repeat units follow at residues 431 to 453, 454 to 476, and 487 to 536; these read TPTV…LFST, PRQT…LLCG, and CRNV…VIDA.

The protein belongs to the glycosyl hydrolase 110 family. B subfamily.

The protein resides in the cell membrane. The catalysed reaction is Hydrolysis of terminal, non-reducing branched (1-&gt;3)-alpha-D-galactosidic residues, producing free D-galactose.. The enzyme catalyses Hydrolysis of terminal, non-reducing linear (1-&gt;3)-alpha-D-galactosidic residues, producing free D-galactose.. It carries out the reaction Hydrolysis of terminal, non-reducing alpha-D-galactose residues in alpha-D-galactosides, including galactose oligosaccharides, galactomannans and galactolipids.. In terms of biological role, alpha-galactosidase. Removes both branched alpha-1,3-linked galactose residues of blood group B antigens and linear alpha-1,3-linked galactose structures. This chain is Alpha-1,3-galactosidase B (glaB), found in Parabacteroides distasonis (strain ATCC 8503 / DSM 20701 / CIP 104284 / JCM 5825 / NCTC 11152).